The sequence spans 1405 residues: DNA-directed RNA polymerase subunit beta' (1405 aa).

Residues Cys-70, Cys-72, Cys-85, and Cys-88 each coordinate Zn(2+). Positions 458, 460, and 462 each coordinate Mg(2+). 4 residues coordinate Zn(2+): Cys-813, Cys-887, Cys-894, and Cys-897.

It belongs to the RNA polymerase beta' chain family. As to quaternary structure, the RNAP catalytic core consists of 2 alpha, 1 beta, 1 beta' and 1 omega subunit. When a sigma factor is associated with the core the holoenzyme is formed, which can initiate transcription. Requires Mg(2+) as cofactor. The cofactor is Zn(2+).

It catalyses the reaction RNA(n) + a ribonucleoside 5'-triphosphate = RNA(n+1) + diphosphate. Its function is as follows. DNA-dependent RNA polymerase catalyzes the transcription of DNA into RNA using the four ribonucleoside triphosphates as substrates. This chain is DNA-directed RNA polymerase subunit beta', found in Albidiferax ferrireducens (strain ATCC BAA-621 / DSM 15236 / T118) (Rhodoferax ferrireducens).